The following is a 328-amino-acid chain: MPPSISAFQAAYIGIEVLIALVSVPGNVLVIWAVKVNQALRDATFCFIVSLAVADVAVGALVIPLAILINIGPETYFHTCLMVACPVLILTQSSILALLAIAVDRYLRVKIPLRYKAVVTPRRAAVAIAGCWILSLVVGLTPMFGWNNLREVQRAWAANGSVGEPVIKCEFEKVISMEYMVYFNFFVWVLPPLLLMVLIYLEVFYLIRRQLSKKASASSGDPHKYYGKELKIAKSLALILFLFALSWLPLHILNCVTLFCPSCQKPSILVYTAIFLTHGNSAMNPIVYAFRIHKFRVTFLKIWNDHFRCRPAPAGDGDEDLPEEKPND.

Topologically, residues 1 to 10 (MPPSISAFQA) are extracellular. A helical transmembrane segment spans residues 11-33 (AYIGIEVLIALVSVPGNVLVIWA). The Cytoplasmic segment spans residues 34–46 (VKVNQALRDATFC). Residues 47-69 (FIVSLAVADVAVGALVIPLAILI) form a helical membrane-spanning segment. The Extracellular portion of the chain corresponds to 70-80 (NIGPETYFHTC). A disulfide bridge connects residues Cys80 and Cys169. The chain crosses the membrane as a helical span at residues 81–102 (LMVACPVLILTQSSILALLAIA). The Cytoplasmic segment spans residues 103 to 123 (VDRYLRVKIPLRYKAVVTPRR). The helical transmembrane segment at 124–146 (AAVAIAGCWILSLVVGLTPMFGW) threads the bilayer. Residues 147 to 176 (NNLREVQRAWAANGSVGEPVIKCEFEKVIS) are Extracellular-facing. N-linked (GlcNAc...) asparagine glycosylation occurs at Asn159. A helical transmembrane segment spans residues 177–201 (MEYMVYFNFFVWVLPPLLLMVLIYL). The Cytoplasmic portion of the chain corresponds to 202 to 235 (EVFYLIRRQLSKKASASSGDPHKYYGKELKIAKS). The chain crosses the membrane as a helical span at residues 236–259 (LALILFLFALSWLPLHILNCVTLF). Residues 260 to 267 (CPSCQKPS) lie on the Extracellular side of the membrane. Residues 268–292 (ILVYTAIFLTHGNSAMNPIVYAFRI) traverse the membrane as a helical segment. Residues 293–328 (HKFRVTFLKIWNDHFRCRPAPAGDGDEDLPEEKPND) lie on the Cytoplasmic side of the membrane. The S-palmitoyl cysteine moiety is linked to residue Cys309.

It belongs to the G-protein coupled receptor 1 family.

It is found in the cell membrane. Its function is as follows. Receptor for adenosine. The activity of this receptor is mediated by G proteins which inhibit adenylyl cyclase. This is Adenosine receptor A1 (ADORA1) from Oryctolagus cuniculus (Rabbit).